The sequence spans 149 residues: Nucleoside diphosphate kinase (149 aa).

Residues K9, F57, R85, T91, R102, and N112 each coordinate ATP. H115 (pros-phosphohistidine intermediate) is an active-site residue.

This sequence belongs to the NDK family. In terms of assembly, homotetramer. Mg(2+) serves as cofactor.

It localises to the cytoplasm. The catalysed reaction is a 2'-deoxyribonucleoside 5'-diphosphate + ATP = a 2'-deoxyribonucleoside 5'-triphosphate + ADP. It carries out the reaction a ribonucleoside 5'-diphosphate + ATP = a ribonucleoside 5'-triphosphate + ADP. Major role in the synthesis of nucleoside triphosphates other than ATP. The ATP gamma phosphate is transferred to the NDP beta phosphate via a ping-pong mechanism, using a phosphorylated active-site intermediate. This chain is Nucleoside diphosphate kinase, found in Desulfitobacterium hafniense (strain Y51).